Here is a 195-residue protein sequence, read N- to C-terminus: Probable GTP-binding protein EngB (195 aa).

In terms of domain architecture, EngB-type G spans 24–195 (ELPEIALAGR…EAWDAILEKL (172 aa)). GTP contacts are provided by residues 32–39 (GRSNVGKS), 59–63 (GKTQL), 77–80 (DVPG), 144–147 (TKAD), and 176–178 (FSS). Residues Ser-39 and Thr-61 each coordinate Mg(2+).

The protein belongs to the TRAFAC class TrmE-Era-EngA-EngB-Septin-like GTPase superfamily. EngB GTPase family. Mg(2+) is required as a cofactor.

Functionally, necessary for normal cell division and for the maintenance of normal septation. The sequence is that of Probable GTP-binding protein EngB from Streptococcus pneumoniae (strain ATCC 700669 / Spain 23F-1).